The sequence spans 215 residues: 3-demethoxyubiquinol 3-hydroxylase (215 aa).

The Fe cation site is built by Glu-64, Glu-94, His-97, Glu-146, Glu-178, and His-181.

This sequence belongs to the COQ7 family. The cofactor is Fe cation.

The protein resides in the cell membrane. The enzyme catalyses a 5-methoxy-2-methyl-3-(all-trans-polyprenyl)benzene-1,4-diol + AH2 + O2 = a 3-demethylubiquinol + A + H2O. The protein operates within cofactor biosynthesis; ubiquinone biosynthesis. In terms of biological role, catalyzes the hydroxylation of 2-nonaprenyl-3-methyl-6-methoxy-1,4-benzoquinol during ubiquinone biosynthesis. In Pseudomonas savastanoi pv. phaseolicola (strain 1448A / Race 6) (Pseudomonas syringae pv. phaseolicola (strain 1448A / Race 6)), this protein is 3-demethoxyubiquinol 3-hydroxylase.